The following is an 845-amino-acid chain: Tyrosine-protein phosphatase corkscrew (845 aa).

SH2 domains follow at residues 6-101 and 111-205; these read WFHP…KQPL and WFHG…RQPF. Residues 227–645 enclose the Tyrosine-protein phosphatase domain; sequence FWEEFESLQQ…KFVYYAVQHY (419 aa). The interval 289-444 is PTPase insert (Cys/Ser-rich); sequence IRLPTDGDLY…REREREMFKT (156 aa). The interval 362–402 is disordered; that stretch reads SKHKRSESSASSSPSSGSGSGPGSSGTSGVSSVNGPGTPTN. Low complexity-rich tracts occupy residues 369–378 and 388–400; these read SSASSSPSSG and TSGV…PGTP. Phosphoserine is present on S419. Residues D545, 583 to 589, and Q630 contribute to the substrate site; that span reads CSAGIGR. The Phosphocysteine intermediate role is filled by C583. The interval 793–824 is disordered; the sequence is DSLKQQQQREEQAPAGAGKMQQPAPPLRPRPG.

It belongs to the protein-tyrosine phosphatase family. Non-receptor class subfamily. In terms of assembly, interacts with drpr isoform A. As to expression, expressed uniformly throughout all tissues during embryogenesis.

It is found in the cytoplasm. The catalysed reaction is O-phospho-L-tyrosyl-[protein] + H2O = L-tyrosyl-[protein] + phosphate. Required in all receptor tyrosine kinase signaling pathways. Functions downstream of the receptor tyrosine kinase torso, acting in concert with D-Raf via tailless. Also functions downstream of Egfr (epidermal growth factor receptor) and btl (fibroblast growth factor receptor). The SH2 domain suggests that csw effects its role by mediating heteromeric protein interactions. Maternally required for normal determination of cell fates at the termini of the embryo. Required for cell fate specification of the ventral ectoderm, in the developing embryonic CNS and for embryonic tracheal cell migration. Functions during imaginal development for proper formation of adult structures such as eyes, aristae, L5 wing vein and the tarsal claw. Dephosphorylates drpr isoform A which is required for the inhibition by drpr isoform A of glial cell engulfment of axonal debris produced following axonal injury. The polypeptide is Tyrosine-protein phosphatase corkscrew (csw) (Drosophila melanogaster (Fruit fly)).